The sequence spans 454 residues: N-myc 2 proto-oncogene protein (454 aa).

3 disordered regions span residues 132–166 (SEKM…HSGT), 230–269 (VAAP…DEEE), and 325–374 (PSPY…VRRR). A compositionally biased stretch (low complexity) spans 151 to 161 (PGAGAASPAGR). Positions 256–269 (ALSDEVDEEEDEEE) are enriched in acidic residues. Residues 363 to 374 (RKSDSEDSVRRR) show a composition bias toward basic and acidic residues. One can recognise a bHLH domain in the interval 371 to 423 (VRRRNHNILERQRRNDLRSSFTTLRDHVPELVKNEKAAKVVILKKACEYVHYL). Residues 423–444 (LQAKEHQLLMEKEKLQARQQQL) are leucine-zipper.

In terms of assembly, efficient DNA binding requires dimerization with another bHLH protein.

The protein localises to the nucleus. The chain is N-myc 2 proto-oncogene protein (N-MYC2) from Marmota monax (Woodchuck).